An 882-amino-acid chain; its full sequence is Alanine--tRNA ligase (882 aa).

Zn(2+) is bound by residues H570, H574, C672, and H676.

It belongs to the class-II aminoacyl-tRNA synthetase family. Requires Zn(2+) as cofactor.

It is found in the cytoplasm. It carries out the reaction tRNA(Ala) + L-alanine + ATP = L-alanyl-tRNA(Ala) + AMP + diphosphate. In terms of biological role, catalyzes the attachment of alanine to tRNA(Ala) in a two-step reaction: alanine is first activated by ATP to form Ala-AMP and then transferred to the acceptor end of tRNA(Ala). Also edits incorrectly charged Ser-tRNA(Ala) and Gly-tRNA(Ala) via its editing domain. The sequence is that of Alanine--tRNA ligase from Xanthomonas axonopodis pv. citri (strain 306).